The chain runs to 127 residues: Large ribosomal subunit protein bL17 (127 aa).

It belongs to the bacterial ribosomal protein bL17 family. Part of the 50S ribosomal subunit. Contacts protein L32.

The sequence is that of Large ribosomal subunit protein bL17 from Lactobacillus delbrueckii subsp. bulgaricus (strain ATCC 11842 / DSM 20081 / BCRC 10696 / JCM 1002 / NBRC 13953 / NCIMB 11778 / NCTC 12712 / WDCM 00102 / Lb 14).